The sequence spans 204 residues: Pneumococcal vaccine antigen A (204 aa).

It localises to the cell surface. The protein is Pneumococcal vaccine antigen A (pvaA) of Streptococcus pneumoniae serotype 4 (strain ATCC BAA-334 / TIGR4).